Consider the following 280-residue polypeptide: Pyrethroid hydrolase (280 aa).

Residues aspartate 202 and histidine 230 each act as charge relay system in the active site. The segment at 254–280 (YRQTATKAGPDRPAGADGGRADRADLP) is disordered.

Belongs to the AB hydrolase superfamily. In terms of assembly, monomer.

It catalyses the reaction (-)-trans-permethrin + H2O = (3-phenoxyphenyl)methanol + (1S,3R)-3-(2,2-dichlorovinyl)-2,2-dimethylcyclopropanecarboxylate + H(+). Its function is as follows. Catalyzes the hydrolysis of pyrethroids pesticides. Catalyzes the hydrolysis of cypermethrin to equimolar amounts of cyano-3-phenoxybenzyl alcohol and 2,2-dimethyl-3-(2,2-dichlorovinyl)-cyclopropanecarboxylic acid. Hydrolyzes cis-permethrin at approximately equal rate to trans-permethrin. This chain is Pyrethroid hydrolase (pytH), found in Sphingobium wenxiniae (strain DSM 21828 / CGMCC 1.7748 / JZ-1).